The sequence spans 303 residues: Mesenteric estrogen-dependent adipogenesis protein (303 aa).

It is found in the cytoplasm. Functionally, involved in processes that promote adipocyte differentiation, lipid accumulation, and glucose uptake in mature adipocytes. The sequence is that of Mesenteric estrogen-dependent adipogenesis protein (MEDAG) from Bos taurus (Bovine).